An 856-amino-acid polypeptide reads, in one-letter code: Lon protease (856 aa).

Residues 68–261 (FPVLPLRDIV…KVLGLMESEI (194 aa)) form the Lon N-terminal domain. 412–419 (GPPGVGKT) contacts ATP. The Lon proteolytic domain maps to 647–828 (EDQVGVVTGL…DEVLHHALLR (182 aa)). Residues Ser-734 and Lys-777 contribute to the active site.

It belongs to the peptidase S16 family. As to quaternary structure, homohexamer. Organized in a ring with a central cavity.

It localises to the cytoplasm. It catalyses the reaction Hydrolysis of proteins in presence of ATP.. Its function is as follows. ATP-dependent serine protease that mediates the selective degradation of mutant and abnormal proteins as well as certain short-lived regulatory proteins. Required for cellular homeostasis and for survival from DNA damage and developmental changes induced by stress. Degrades polypeptides processively to yield small peptide fragments that are 5 to 10 amino acids long. Binds to DNA in a double-stranded, site-specific manner. The sequence is that of Lon protease from Azorhizobium caulinodans (strain ATCC 43989 / DSM 5975 / JCM 20966 / LMG 6465 / NBRC 14845 / NCIMB 13405 / ORS 571).